The sequence spans 276 residues: Large ribosomal subunit protein uL2c (276 aa).

The disordered stretch occupies residues 221 to 276; that stretch reads RGSVMNPVDHPHGGGEGRAPIGRSRPVTPWGKPALGQKTRKPKKQSNKLILRKRKK. The span at 258–276 shows a compositional bias: basic residues; the sequence is KTRKPKKQSNKLILRKRKK.

The protein belongs to the universal ribosomal protein uL2 family. In terms of assembly, part of the 50S ribosomal subunit.

Its subcellular location is the plastid. It is found in the chloroplast. The protein is Large ribosomal subunit protein uL2c (rpl2) of Stigeoclonium helveticum (Green alga).